The primary structure comprises 153 residues: Pheromone-binding protein Gp-9 (153 aa).

Residues 1–19 form the signal peptide; it reads MKTFVLHIFIFAFVAFASA. 3 disulfide bridges follow: cysteine 37–cysteine 77, cysteine 73–cysteine 129, and cysteine 118–cysteine 138.

This sequence belongs to the PBP/GOBP family. In terms of assembly, homodimer.

It localises to the secreted. In terms of biological role, colony queen number, a major feature of social organization, is associated with worker genotype for Gp-9. Colonies are headed by either a single reproductive queen (monogyne form) or multiple queens (polygyne form). Differences in worker Gp-9 genotypes between social forms may cause differences in workers' abilities to recognize queens and regulate their numbers. This is Pheromone-binding protein Gp-9 from Solenopsis amblychila (Desert fire ant).